Here is a 366-residue protein sequence, read N- to C-terminus: Erythronate-4-phosphate dehydrogenase (366 aa).

Ser-46 and Thr-67 together coordinate substrate. NAD(+) is bound by residues Asp-147 and Thr-175. Arg-208 is a catalytic residue. Asp-228 provides a ligand contact to NAD(+). Glu-233 is a catalytic residue. Catalysis depends on His-250, which acts as the Proton donor. Gly-253 is an NAD(+) binding site. Substrate is bound at residue Tyr-254.

Belongs to the D-isomer specific 2-hydroxyacid dehydrogenase family. PdxB subfamily. As to quaternary structure, homodimer.

It is found in the cytoplasm. The enzyme catalyses 4-phospho-D-erythronate + NAD(+) = (R)-3-hydroxy-2-oxo-4-phosphooxybutanoate + NADH + H(+). The protein operates within cofactor biosynthesis; pyridoxine 5'-phosphate biosynthesis; pyridoxine 5'-phosphate from D-erythrose 4-phosphate: step 2/5. In terms of biological role, catalyzes the oxidation of erythronate-4-phosphate to 3-hydroxy-2-oxo-4-phosphonooxybutanoate. The sequence is that of Erythronate-4-phosphate dehydrogenase from Coxiella burnetii (strain Dugway 5J108-111).